The primary structure comprises 38 residues: RapG inhibitor (38 aa).

A propeptide spanning residues 1–33 (MKRFLIGAGVAAVILSGWFIADHQTHSQEMKVA) is cleaved from the precursor.

This sequence belongs to the Phr family. Post-translationally, contains a predicted signal peptide cleavage site in the N-terminal region, however the propeptide is probably subject to only one processing event, at the N-terminal end of the mature peptide.

It is found in the secreted. The protein localises to the cytoplasm. Functionally, signaling molecule involved in the regulation of expression of DegU-controlled genes. Secreted during production, but the mature peptide acts intracellularly, indicating that it needs to be imported into the cell to function. Stimulates the DegU-dependent expression of aprE, an extracellular alkaline protease. Acts by inhibiting RapG activity. At high concentrations, represses the DegS-dependent aprE expression. This Bacillus subtilis (strain 168) protein is RapG inhibitor (phrG).